The chain runs to 407 residues: Tryptophan synthase beta chain (407 aa).

Lys91 bears the N6-(pyridoxal phosphate)lysine mark.

It belongs to the TrpB family. As to quaternary structure, tetramer of two alpha and two beta chains. Requires pyridoxal 5'-phosphate as cofactor.

It catalyses the reaction (1S,2R)-1-C-(indol-3-yl)glycerol 3-phosphate + L-serine = D-glyceraldehyde 3-phosphate + L-tryptophan + H2O. Its pathway is amino-acid biosynthesis; L-tryptophan biosynthesis; L-tryptophan from chorismate: step 5/5. The beta subunit is responsible for the synthesis of L-tryptophan from indole and L-serine. This Streptococcus pneumoniae serotype 2 (strain D39 / NCTC 7466) protein is Tryptophan synthase beta chain.